The chain runs to 128 residues: Glycine cleavage system H protein (128 aa).

The 83-residue stretch at 23-105 (VATVGISDHA…YEGGWLFKVQ (83 aa)) folds into the Lipoyl-binding domain. Lys-64 carries the post-translational modification N6-lipoyllysine.

It belongs to the GcvH family. In terms of assembly, the glycine cleavage system is composed of four proteins: P, T, L and H. (R)-lipoate is required as a cofactor.

In terms of biological role, the glycine cleavage system catalyzes the degradation of glycine. The H protein shuttles the methylamine group of glycine from the P protein to the T protein. The polypeptide is Glycine cleavage system H protein (Alcanivorax borkumensis (strain ATCC 700651 / DSM 11573 / NCIMB 13689 / SK2)).